The chain runs to 152 residues: Putative RING finger protein 157L (152 aa).

Residues 111 to 146 (CVVCYENEICIKIQPCNHFVVCKSCFNRLNTCPMCR) form an RING-type zinc finger.

Belongs to the IIV-6 157L family.

The polypeptide is Putative RING finger protein 157L (Invertebrate iridescent virus 6 (IIV-6)).